The chain runs to 322 residues: Ferrochelatase (322 aa).

Fe cation is bound by residues histidine 194 and glutamate 275.

Belongs to the ferrochelatase family.

The protein resides in the cytoplasm. It catalyses the reaction heme b + 2 H(+) = protoporphyrin IX + Fe(2+). It participates in porphyrin-containing compound metabolism; protoheme biosynthesis; protoheme from protoporphyrin-IX: step 1/1. Catalyzes the ferrous insertion into protoporphyrin IX. This chain is Ferrochelatase, found in Yersinia enterocolitica.